The chain runs to 331 residues: 6-phosphogluconolactonase (331 aa).

K287 bears the N6-acetyllysine mark.

The protein belongs to the cycloisomerase 2 family.

It catalyses the reaction 6-phospho-D-glucono-1,5-lactone + H2O = 6-phospho-D-gluconate + H(+). The protein operates within carbohydrate degradation; pentose phosphate pathway; D-ribulose 5-phosphate from D-glucose 6-phosphate (oxidative stage): step 2/3. Functionally, catalyzes the hydrolysis of 6-phosphogluconolactone to 6-phosphogluconate. The protein is 6-phosphogluconolactonase of Escherichia coli O139:H28 (strain E24377A / ETEC).